The chain runs to 1551 residues: Pentafunctional AROM polypeptide (1551 aa).

The tract at residues 1–379 is 3-dehydroquinate synthase; it reads MSIEKVPILG…YQLKAHQVSK (379 aa). NAD(+) is bound by residues 42 to 44, 80 to 83, 111 to 113, and Asp116; these read DTN, ENNK, and GGV. Position 127 (Arg127) interacts with 7-phospho-2-dehydro-3-deoxy-D-arabino-heptonate. 136 to 137 contributes to the NAD(+) binding site; the sequence is TT. 7-phospho-2-dehydro-3-deoxy-D-arabino-heptonate-binding residues include Asp143 and Lys149. Lys158 is a binding site for NAD(+). Asn159 lines the 7-phospho-2-dehydro-3-deoxy-D-arabino-heptonate pocket. NAD(+) is bound by residues 176–179 and Asn187; that span reads FLET. Residue Glu191 participates in Zn(2+) binding. 7-phospho-2-dehydro-3-deoxy-D-arabino-heptonate-binding positions include 191–194 and Lys243; that span reads EVVK. Glu253 serves as the catalytic Proton acceptor; for 3-dehydroquinate synthase activity. Residues 257–261 and His264 each bind 7-phospho-2-dehydro-3-deoxy-D-arabino-heptonate; that span reads RNLLN. Residue His264 participates in Zn(2+) binding. The active-site Proton acceptor; for 3-dehydroquinate synthase activity is His268. 7-phospho-2-dehydro-3-deoxy-D-arabino-heptonate-binding residues include His280 and Lys351. His280 contacts Zn(2+). The tract at residues 392–838 is EPSP synthase; the sequence is VHPFTNPPKE…WDILHSKFKI (447 aa). The shikimate kinase stretch occupies residues 858–1048; the sequence is DKSIIVIGMR…VPAGRSAAVV (191 aa). 865-872 contacts ATP; it reads GMRGTGKS. The segment at 1049–1258 is 3-dehydroquinase; that stretch reads LTSPDLNEVV…NDEEFLTIGE (210 aa). The active-site Schiff-base intermediate with substrate; for 3-dehydroquinate dehydratase activity is Arg1194. The interval 1271 to 1551 is shikimate dehydrogenase; it reads AKKFWVIGSP…EIIHRAVVEE (281 aa).

It in the N-terminal section; belongs to the sugar phosphate cyclases superfamily. Dehydroquinate synthase family. This sequence in the 2nd section; belongs to the EPSP synthase family. The protein in the 3rd section; belongs to the shikimate kinase family. In the 4th section; belongs to the type-I 3-dehydroquinase family. It in the C-terminal section; belongs to the shikimate dehydrogenase family. As to quaternary structure, homodimer. Zn(2+) serves as cofactor.

It is found in the cytoplasm. The catalysed reaction is 7-phospho-2-dehydro-3-deoxy-D-arabino-heptonate = 3-dehydroquinate + phosphate. The enzyme catalyses 3-dehydroquinate = 3-dehydroshikimate + H2O. It catalyses the reaction shikimate + NADP(+) = 3-dehydroshikimate + NADPH + H(+). It carries out the reaction shikimate + ATP = 3-phosphoshikimate + ADP + H(+). The catalysed reaction is 3-phosphoshikimate + phosphoenolpyruvate = 5-O-(1-carboxyvinyl)-3-phosphoshikimate + phosphate. It participates in metabolic intermediate biosynthesis; chorismate biosynthesis; chorismate from D-erythrose 4-phosphate and phosphoenolpyruvate: step 2/7. It functions in the pathway metabolic intermediate biosynthesis; chorismate biosynthesis; chorismate from D-erythrose 4-phosphate and phosphoenolpyruvate: step 3/7. Its pathway is metabolic intermediate biosynthesis; chorismate biosynthesis; chorismate from D-erythrose 4-phosphate and phosphoenolpyruvate: step 4/7. The protein operates within metabolic intermediate biosynthesis; chorismate biosynthesis; chorismate from D-erythrose 4-phosphate and phosphoenolpyruvate: step 5/7. It participates in metabolic intermediate biosynthesis; chorismate biosynthesis; chorismate from D-erythrose 4-phosphate and phosphoenolpyruvate: step 6/7. The AROM polypeptide catalyzes 5 consecutive enzymatic reactions in prechorismate polyaromatic amino acid biosynthesis. This Candida albicans (strain SC5314 / ATCC MYA-2876) (Yeast) protein is Pentafunctional AROM polypeptide.